The primary structure comprises 70 residues: ATP synthase subunit c (70 aa).

Transmembrane regions (helical) follow at residues 3–23 and 47–67; these read FIAA…GNGM and FIGV…AFML.

It belongs to the ATPase C chain family. As to quaternary structure, F-type ATPases have 2 components, F(1) - the catalytic core - and F(0) - the membrane proton channel. F(1) has five subunits: alpha(3), beta(3), gamma(1), delta(1), epsilon(1). F(0) has three main subunits: a(1), b(2) and c(10-14). The alpha and beta chains form an alternating ring which encloses part of the gamma chain. F(1) is attached to F(0) by a central stalk formed by the gamma and epsilon chains, while a peripheral stalk is formed by the delta and b chains.

The protein resides in the cell membrane. F(1)F(0) ATP synthase produces ATP from ADP in the presence of a proton or sodium gradient. F-type ATPases consist of two structural domains, F(1) containing the extramembraneous catalytic core and F(0) containing the membrane proton channel, linked together by a central stalk and a peripheral stalk. During catalysis, ATP synthesis in the catalytic domain of F(1) is coupled via a rotary mechanism of the central stalk subunits to proton translocation. Functionally, key component of the F(0) channel; it plays a direct role in translocation across the membrane. A homomeric c-ring of between 10-14 subunits forms the central stalk rotor element with the F(1) delta and epsilon subunits. The chain is ATP synthase subunit c from Lacticaseibacillus casei (strain BL23) (Lactobacillus casei).